We begin with the raw amino-acid sequence, 177 residues long: ATP synthase subunit delta (177 aa).

This sequence belongs to the ATPase delta chain family. As to quaternary structure, F-type ATPases have 2 components, F(1) - the catalytic core - and F(0) - the membrane proton channel. F(1) has five subunits: alpha(3), beta(3), gamma(1), delta(1), epsilon(1). F(0) has three main subunits: a(1), b(2) and c(10-14). The alpha and beta chains form an alternating ring which encloses part of the gamma chain. F(1) is attached to F(0) by a central stalk formed by the gamma and epsilon chains, while a peripheral stalk is formed by the delta and b chains.

The protein localises to the cell inner membrane. Functionally, f(1)F(0) ATP synthase produces ATP from ADP in the presence of a proton or sodium gradient. F-type ATPases consist of two structural domains, F(1) containing the extramembraneous catalytic core and F(0) containing the membrane proton channel, linked together by a central stalk and a peripheral stalk. During catalysis, ATP synthesis in the catalytic domain of F(1) is coupled via a rotary mechanism of the central stalk subunits to proton translocation. Its function is as follows. This protein is part of the stalk that links CF(0) to CF(1). It either transmits conformational changes from CF(0) to CF(1) or is implicated in proton conduction. The protein is ATP synthase subunit delta of Haemophilus influenzae (strain PittGG).